The chain runs to 461 residues: Hydroxyproline dehydrogenase (461 aa).

N6-acetyllysine is present on K310.

Belongs to the proline oxidase family. Requires FAD as cofactor.

The catalysed reaction is trans-4-hydroxy-L-proline + a quinone = (3R,5S)-1-pyrroline-3-hydroxy-5-carboxylate + a quinol + H(+). It carries out the reaction L-proline + a quinone = (S)-1-pyrroline-5-carboxylate + a quinol + H(+). Its pathway is amino-acid degradation; L-proline degradation into L-glutamate; L-glutamate from L-proline: step 1/2. Its function is as follows. Dehydrogenase that converts trans-4-L-hydroxyproline to delta-1-pyrroline-3-hydroxy-5-carboxylate (Hyp) using ubiquinone-10 as the terminal electron acceptor. Can also use proline as a substrate but with a very much lower efficiency. Does not react with other diastereomers of Hyp: trans-4-D-hydroxyproline and cis-4-L-hydroxyproline. Ubiquininone analogs such as menadione, duroquinone and ubiquinone-1 react more efficiently than oxygen as the terminal electron acceptor during catalysis. In Bos taurus (Bovine), this protein is Hydroxyproline dehydrogenase.